Reading from the N-terminus, the 495-residue chain is Aspartyl/glutamyl-tRNA(Asn/Gln) amidotransferase subunit B (495 aa).

This sequence belongs to the GatB/GatE family. GatB subfamily. As to quaternary structure, heterotrimer of A, B and C subunits.

The enzyme catalyses L-glutamyl-tRNA(Gln) + L-glutamine + ATP + H2O = L-glutaminyl-tRNA(Gln) + L-glutamate + ADP + phosphate + H(+). The catalysed reaction is L-aspartyl-tRNA(Asn) + L-glutamine + ATP + H2O = L-asparaginyl-tRNA(Asn) + L-glutamate + ADP + phosphate + 2 H(+). Allows the formation of correctly charged Asn-tRNA(Asn) or Gln-tRNA(Gln) through the transamidation of misacylated Asp-tRNA(Asn) or Glu-tRNA(Gln) in organisms which lack either or both of asparaginyl-tRNA or glutaminyl-tRNA synthetases. The reaction takes place in the presence of glutamine and ATP through an activated phospho-Asp-tRNA(Asn) or phospho-Glu-tRNA(Gln). The chain is Aspartyl/glutamyl-tRNA(Asn/Gln) amidotransferase subunit B from Halobacterium salinarum (strain ATCC 700922 / JCM 11081 / NRC-1) (Halobacterium halobium).